Here is a 298-residue protein sequence, read N- to C-terminus: N-acetylmuramic acid 6-phosphate etherase (298 aa).

An SIS domain is found at 55 to 218 (IHAQVSGGGR…STGLMIKSGK (164 aa)). Glu-83 acts as the Proton donor in catalysis. Residue Glu-114 is part of the active site.

The protein belongs to the GCKR-like family. MurNAc-6-P etherase subfamily. Homodimer.

It carries out the reaction N-acetyl-D-muramate 6-phosphate + H2O = N-acetyl-D-glucosamine 6-phosphate + (R)-lactate. It participates in amino-sugar metabolism; 1,6-anhydro-N-acetylmuramate degradation. The protein operates within amino-sugar metabolism; N-acetylmuramate degradation. It functions in the pathway cell wall biogenesis; peptidoglycan recycling. In terms of biological role, specifically catalyzes the cleavage of the D-lactyl ether substituent of MurNAc 6-phosphate, producing GlcNAc 6-phosphate and D-lactate. Together with AnmK, is also required for the utilization of anhydro-N-acetylmuramic acid (anhMurNAc) either imported from the medium or derived from its own cell wall murein, and thus plays a role in cell wall recycling. The chain is N-acetylmuramic acid 6-phosphate etherase from Escherichia coli O8 (strain IAI1).